A 279-amino-acid polypeptide reads, in one-letter code: H-2 class II histocompatibility antigen gamma chain (279 aa).

A disordered region spans residues methionine 1–glutamate 23. Residues methionine 1–arginine 29 are Cytoplasmic-facing. The residue at position 9 (serine 9) is a Phosphoserine. The helical; Signal-anchor for type II membrane protein transmembrane segment at glycine 30 to tyrosine 55 threads the bilayer. The Extracellular segment spans residues glutamine 56 to leucine 279. N-linked (GlcNAc...) asparagine glycosylation is found at asparagine 113 and asparagine 119. Residues leucine 193–cysteine 254 enclose the Thyroglobulin type-1 domain. Intrachain disulfides connect cysteine 196/cysteine 215, cysteine 226/cysteine 233, and cysteine 235/cysteine 254. O-linked (Xyl...) (chondroitin sulfate) serine glycosylation occurs at serine 265.

Nonamer composed of three alpha/beta/gamma heterotrimers. Interacts with CD44; this complex is essential for the MIF-induced signaling cascade that results in B cell survival. As to quaternary structure, interacts with the mature form of CTSL; the complex survive in neutral pH environment. In terms of tissue distribution, expressed in thymus and lymph noodes. Expressed by antigen-presenting cells (APCs). Expressed in thymus and lymph noodes.

The protein resides in the late endosome. It localises to the lysosome. The protein localises to the cell membrane. It is found in the endoplasmic reticulum membrane. Its subcellular location is the golgi apparatus. The protein resides in the trans-Golgi network. It localises to the endosome. The protein localises to the secreted. In terms of biological role, plays a critical role in MHC class II antigen processing by stabilizing peptide-free class II alpha/beta heterodimers in a complex soon after their synthesis and directing transport of the complex from the endoplasmic reticulum to compartments where peptide loading of class II takes place. Enhance also the stimulation of T-cell responses through interaction with CD44. Functionally, stabilizes the conformation of mature CTSL by binding to its active site and serving as a chaperone to help maintain a pool of mature enzyme in endocytic compartments and extracellular space of antigen-presenting cells (APCs). Binds to the peptide-binding site of MHC class II alpha/beta heterodimers forming an alpha-beta-CLIP complex, thereby preventing the loading of antigenic peptides to the MHC class II complex until its release by HLA-DM in the endosome. This chain is H-2 class II histocompatibility antigen gamma chain, found in Mus musculus (Mouse).